The sequence spans 56 residues: MAKKGIREKIRLVSTANTGHFYTTDKNKRNMPGKFEIKKFDPVVRQHVVYKEAKIK.

Belongs to the bacterial ribosomal protein bL33 family.

The protein is Large ribosomal subunit protein bL33 of Vibrio vulnificus (strain YJ016).